The chain runs to 311 residues: MGQRPFSPNHRSGVLNATTAGAVQFNVLGPLELNLRGTKLPLGTPKQRAVLAMLLLSRNQVVAADALVQAIWEKSPPARARRTVHTYICNLRRTLSDAGVDSRNILVSEPPGYRLLIGDRQQCDLDRFVAAKESGLRASAKGYFSEAIRYLDSALQNWRGPVLGDLRSFMFVQMFSRALTEDELLVHTKLAEAAIACGRADVVIPKLERLVAMHPYRESLWKQLMLGYYVNEYQSAAIDAYHRLKSTLAEELGVEPAPTIRALYHKILRQLPMDDLVGRVTRGRVDLRGGNGAKVEELTESDKDLLPIGLA.

Positions 15–117 (LNATTAGAVQ…SEPPGYRLLI (103 aa)) form a DNA-binding region, ompR/PhoB-type.

This sequence belongs to the AfsR/DnrI/RedD regulatory family.

In terms of biological role, acts as a positive transcriptional regulator of the molybdopterin biosynthesis moa1 locus, promoting the expression of the moaA1B1C1D1 genes. Binds directly to the moaA1 promoter. The chain is Transcriptional regulatory protein MoaR1 (moaR1) from Mycobacterium tuberculosis (strain ATCC 25618 / H37Rv).